A 154-amino-acid chain; its full sequence is Large ribosomal subunit protein uL30 (154 aa).

The segment at 114–146 is disordered; the sequence is PTLRLHPPRGGHDGVKHPVKEGGQLGKHDTEGI. Positions 123-144 are enriched in basic and acidic residues; that stretch reads GGHDGVKHPVKEGGQLGKHDTE.

It belongs to the universal ribosomal protein uL30 family. As to quaternary structure, part of the 50S ribosomal subunit. Binds 5S rRNA.

Its function is as follows. This is one of 5 proteins that mediate the attachment of the 5S rRNA onto the large ribosomal subunit, stabilizing the orientation of adjacent RNA domains. The sequence is that of Large ribosomal subunit protein uL30 from Haloarcula marismortui (strain ATCC 43049 / DSM 3752 / JCM 8966 / VKM B-1809) (Halobacterium marismortui).